We begin with the raw amino-acid sequence, 308 residues long: MITTVVGSYPTEPRGPETLGERLLNFFGSYDRYRPAIEAAVRDQFRAGVDIISDGQVRGDMVGHFAAAIGGMKIEDGTSIIYSRITPPAGSIGAADLRYAYRILRGLTDDESRGVKGIITGPSTMIYASRIEGFYDPQKRDRAVMDMAGVLKIEAKHLQDAGAAMIQIDEPFLSTGIVDMKTAGRAIDHIAAGLDIEVSLHVCGDIRNVLSDLLRFKVDVLDLEFAGRPSNLEVLEEKWRGDKGVGFGCVDTTTERVESMEEIRNLIKRGADIVGEENLYIDPDCGMRKLPRKAAFSKLRNMVMAAGN.

Zn(2+) is bound by residues histidine 201, cysteine 203, glutamate 224, and cysteine 285.

It belongs to the archaeal MetE family. It depends on Zn(2+) as a cofactor.

It functions in the pathway amino-acid biosynthesis; L-methionine biosynthesis via de novo pathway. Functionally, catalyzes the transfer of a methyl group to L-homocysteine resulting in methionine formation. Can use methylcobalamin and methylcobinamide as methyl donors, but methylcobalamin is not considered to be the physiological substrate. This chain is Methionine synthase, found in Methanothermobacter thermautotrophicus (strain ATCC 29096 / DSM 1053 / JCM 10044 / NBRC 100330 / Delta H) (Methanobacterium thermoautotrophicum).